The sequence spans 186 residues: UPF0340 protein SEQ_1951 (186 aa).

The protein belongs to the UPF0340 family.

The sequence is that of UPF0340 protein SEQ_1951 from Streptococcus equi subsp. equi (strain 4047).